Reading from the N-terminus, the 683-residue chain is Cyclic nucleotide-gated channel alpha-1 (683 aa).

Over 1 to 160 (MKTNIINTWH…PSGNMYYNWL (160 aa)) the chain is Cytoplasmic. A disordered region spans residues 34-144 (ACSSFSDNDN…PKEKKEEEKK (111 aa)). The segment covering 105 to 144 (SKADDKKESKKDPEKKKKKEKEKEKKKEEKPKEKKEEEKK) has biased composition (basic and acidic residues). A helical transmembrane segment spans residues 161-182 (FCITLPVMYNWTMIIARACFDE). Residues 183–192 (LQSDYLEYWL) are Extracellular-facing. Residues 193 to 213 (IFDYVSDVVYLADMFVRTRTG) form a helical membrane-spanning segment. Residues 214–238 (YLEQGLLVKDELKLIEKYKANLQFK) lie on the Cytoplasmic side of the membrane. A helical transmembrane segment spans residues 239 to 257 (LDVLSVIPTDLLYFKFGWN). Residues 258-262 (YPEIR) are Extracellular-facing. A helical transmembrane segment spans residues 263-281 (LNRLLRISRMFEFFQRTET). Residues 282 to 288 (RTNYPNI) lie on the Cytoplasmic side of the membrane. The interval 286–394 (PNIFRISNLV…GNIGSMISNM (109 aa)) is ion conduction pathway. The chain crosses the membrane as a helical span at residues 289–312 (FRISNLVMYIVIIIHWNACVYYSI). Residues 313–335 (SKAIGFGNDTWVYPDVNDPEFGR) are Extracellular-facing. An N-linked (GlcNAc...) asparagine glycan is attached at N320. A run of 2 helical transmembrane segments spans residues 336-370 (LARKYVYSLYWSTLTLTTIGETPPPVLDSEYVFVV) and 371-395 (VDFLIGVLIFATIVGNIGSMISNMN). The tract at residues 353 to 356 (TIGE) is selectivity filter. The segment at 396–472 (AARAEFQSRV…DTLKKVRIFA (77 aa)) is C-linker. Topologically, residues 396-683 (AARAEFQSRV…ESEPTESLQG (288 aa)) are cytoplasmic. The tract at residues 476-596 (AGLLVELVLK…EEKGRQILMK (121 aa)) is cyclic nucleotide-binding domain. The 3',5'-cyclic GMP site is built by G536, S539, R552, and T553. 3',5'-cyclic AMP is bound by residues R552 and T553. The stretch at 614 to 668 (LEEKVTRMEGSVDLLQTRFARILAEYESMQQKLKQRLTKVEKFLKPLIETEFSAL) forms a coiled coil.

This sequence belongs to the cyclic nucleotide-gated cation channel (TC 1.A.1.5) family. CNGA1 subfamily. As to quaternary structure, forms heterotetrameric channels composed of CNGA1 and CNGB1 subunits with 3:1 stoichiometry. May also form cyclic nucleotide-activated homotetrameric channels, that are efficiently activated by saturating cGMP, but poorly activated by saturating cAMP compared to the heterotetramer with CNGB1. The channel binds Ca(2+)-bound CALM1 via CaM1 and CaM2 regions of the CNGB1 subunit; this interaction modulates the affinity of the channel for cNMPs in response to intracellular Ca(2+) levels. As to expression, rod cells in the retina.

The protein localises to the cell membrane. The catalysed reaction is Ca(2+)(in) = Ca(2+)(out). The enzyme catalyses Na(+)(in) = Na(+)(out). It catalyses the reaction K(+)(in) = K(+)(out). It carries out the reaction NH4(+)(in) = NH4(+)(out). The catalysed reaction is Rb(+)(in) = Rb(+)(out). The enzyme catalyses Li(+)(in) = Li(+)(out). It catalyses the reaction Cs(+)(in) = Cs(+)(out). Its function is as follows. Pore-forming subunit of the rod cyclic nucleotide-gated channel. Mediates rod photoresponses at dim light converting transient changes in intracellular cGMP levels into electrical signals. In the dark, cGMP levels are high and keep the channel open enabling a steady inward current carried by Na(+) and Ca(2+) ions that leads to membrane depolarization and neurotransmitter release from synaptic terminals. Upon photon absorption cGMP levels decline leading to channel closure and membrane hyperpolarization that ultimately slows neurotransmitter release and signals the presence of light, the end point of the phototransduction cascade. Conducts cGMP- and cAMP-gated ion currents, with permeability for monovalent and divalent cations. The selectivity for Ca(2+) over Na(+) increases with cGMP concentrations, whereas the selectivity among monovalent ions is independent of the cGMP levels. In Rattus norvegicus (Rat), this protein is Cyclic nucleotide-gated channel alpha-1.